The following is a 961-amino-acid chain: MNFLRGVMGGQSAGPQHTEAETIQKLCDRVASSTLLDDRRNAVRALKSLSKKYRLEVGIQAMEHLIHVLQTDRSDSEIIGYALDTLYNIISNDEEEEVEENSTRQSEDLGSQFTEIFIKQQENVTLLLSLLEEFDFHVRWPGVKLLTSLLKQLGPQVQQIILVSPMGVSRLMDLLADSREVIRNDGVLLLQALTRSNGAIQKIVAFENAFERLLDIITEEGNSDGGIVVEDCLILLQNLLKNNNSNQNFFKEGSYIQRMKPWFEVGDENSGWSAQKVTNLHLMLQLVRVLVSPNNPPGATSSCQKAMFQCGLLQQLCTILMATGVPADILTETINTVSEVIRGCQVNQDYFASVNAPSNPPRPAIVVLLMSMVNERQPFVLRCAVLYCFQCFLYKNQKGQGEIVSTLLPSTIDATGNTVSAGQLLCGGLFSTDSLSNWCAAVALAHALQENATQKEQLLRVQLATSIGNPPVSLLQQCTNILSQGSKIQTRVGLLMLLCTWLSNCPIAVTHFLHNSANVPFLTGQIAENLGEEEQLVQGLCALLLGISIYFNDNSLETYMKEKLKQLIEKRIGKENFIEKLGFISKHELYSRASQKPQPNFPSPEYMIFDHEFTKLVKELEGVITKAIYKSSEEDKKEEEVKKTLEQHDSIVTHYKNMIREQDLQLEELKQQISTLKCQNEQLQTAVTQQVSQIQQHKDQYNLLKVQLGKDSQHQGPYTDGAQMNGVQPEEISRLREEIEELKSNRELLQSQLAEKDSLIENLKSSQLSPGTNEQSSATAGDSEQIAELKQELATLKSQLNSQSVEITKLQTEKQELLQKTEAFAKSAPVPGESETVIATKTTDVEGRLSALLQETKELKNEIKALSEERTAIKEQLDSSNSTIAILQNEKNKLEVDITDSKKEQDDLLVLLADQDQKIFSLKNKLKELGHPVEEEDELESGDQDDEDDEDEDDGKEQGHI.

The segment at 1-641 (MNFLRGVMGG…SEEDKKEEEV (641 aa)) is globular head. ARM repeat units follow at residues 20–60 (AETI…VGIQ), 61–121 (AMEH…IKQQ), 123–163 (NVTL…IILV), 166–207 (MGVS…VAFE), 208–253 (NAFE…FKEG), 255–310 (YIQR…MFQC), 311–354 (GLLQ…FASV), 363–408 (PAIV…STLL), 420–459 (SAGQ…EQLL), 473–513 (SLLQ…THFL), 518–571 (NVPF…IEKR), and 573–630 (GKEN…AIYK). At S50 the chain carries Phosphoserine. K202 is modified (N6-acetyllysine). Residues 642–929 (KKTLEQHDSI…FSLKNKLKEL (288 aa)) adopt a coiled-coil conformation. Residues 764–782 (KSSQLSPGTNEQSSATAGD) are compositionally biased toward polar residues. Disordered regions lie at residues 764–784 (KSSQ…GDSE) and 929–961 (LGHP…QGHI). Residues 934–955 (EEEDELESGDQDDEDDEDEDDG) are compositionally biased toward acidic residues. S941 carries the post-translational modification Phosphoserine.

This sequence belongs to the VDP/USO1/EDE1 family. In terms of assembly, homodimer. Dimerizes by parallel association of the tails, resulting in an elongated structure with two globular head domains side by side, and a long rod-like tail structure. Interacts with MIF. In terms of processing, phosphorylated in a cell cycle-specific manner; phosphorylated in interphase but not in mitotic cells. Dephosphorylated protein associates with the Golgi membrane; phosphorylation promotes dissociation.

Its subcellular location is the cytoplasm. The protein localises to the cytosol. The protein resides in the golgi apparatus membrane. Functionally, general vesicular transport factor required for intercisternal transport in the Golgi stack; it is required for transcytotic fusion and/or subsequent binding of the vesicles to the target membrane. May well act as a vesicular anchor by interacting with the target membrane and holding the vesicular and target membranes in proximity. The protein is General vesicular transport factor p115 (USO1) of Bos taurus (Bovine).